A 39-amino-acid chain; its full sequence is Omega-theraphotoxin-Asp1a (39 aa).

3 disulfides stabilise this stretch: cysteine 4/cysteine 25, cysteine 8/cysteine 31, and cysteine 17/cysteine 36.

As to expression, expressed by the venom gland.

The protein resides in the secreted. Toxin that inhibits voltage-gated calcium channels in rat cerebellar granule cells (IC(50)&lt;200 nM). Is lethal to cockroaches. The chain is Omega-theraphotoxin-Asp1a from Aphonopelma sp. (American tarantula).